The primary structure comprises 454 residues: Bifunctional protein GlmU (454 aa).

A pyrophosphorylase region spans residues 1-240 (MNVSVVILAA…EEEFMGVNSK (240 aa)). UDP-N-acetyl-alpha-D-glucosamine-binding positions include 8 to 11 (LAAG), Lys22, and 87 to 88 (GT). Position 119 (Asp119) interacts with Mg(2+). UDP-N-acetyl-alpha-D-glucosamine is bound by residues Gly152, Glu166, Asn181, and Asn238. Asn238 contacts Mg(2+). The linker stretch occupies residues 241–261 (IQLACAQEIMLQRLREKAMEQ). Residues 262–454 (GVIMNLPHTI…SDKNEEKKEQ (193 aa)) are N-acetyltransferase. UDP-N-acetyl-alpha-D-glucosamine contacts are provided by Arg325 and Lys342. The Proton acceptor role is filled by His353. Residues Tyr356 and Asn367 each coordinate UDP-N-acetyl-alpha-D-glucosamine. Acetyl-CoA contacts are provided by residues Ala370, 376-377 (NY), Ser395, Ala413, and Arg430.

In the N-terminal section; belongs to the N-acetylglucosamine-1-phosphate uridyltransferase family. It in the C-terminal section; belongs to the transferase hexapeptide repeat family. Homotrimer. Mg(2+) is required as a cofactor.

The protein resides in the cytoplasm. The catalysed reaction is alpha-D-glucosamine 1-phosphate + acetyl-CoA = N-acetyl-alpha-D-glucosamine 1-phosphate + CoA + H(+). It catalyses the reaction N-acetyl-alpha-D-glucosamine 1-phosphate + UTP + H(+) = UDP-N-acetyl-alpha-D-glucosamine + diphosphate. Its pathway is nucleotide-sugar biosynthesis; UDP-N-acetyl-alpha-D-glucosamine biosynthesis; N-acetyl-alpha-D-glucosamine 1-phosphate from alpha-D-glucosamine 6-phosphate (route II): step 2/2. It participates in nucleotide-sugar biosynthesis; UDP-N-acetyl-alpha-D-glucosamine biosynthesis; UDP-N-acetyl-alpha-D-glucosamine from N-acetyl-alpha-D-glucosamine 1-phosphate: step 1/1. It functions in the pathway bacterial outer membrane biogenesis; LPS lipid A biosynthesis. Its function is as follows. Catalyzes the last two sequential reactions in the de novo biosynthetic pathway for UDP-N-acetylglucosamine (UDP-GlcNAc). The C-terminal domain catalyzes the transfer of acetyl group from acetyl coenzyme A to glucosamine-1-phosphate (GlcN-1-P) to produce N-acetylglucosamine-1-phosphate (GlcNAc-1-P), which is converted into UDP-GlcNAc by the transfer of uridine 5-monophosphate (from uridine 5-triphosphate), a reaction catalyzed by the N-terminal domain. The sequence is that of Bifunctional protein GlmU from Helicobacter hepaticus (strain ATCC 51449 / 3B1).